The sequence spans 338 residues: 6-phosphogluconolactonase (338 aa).

Belongs to the cycloisomerase 2 family.

It catalyses the reaction 6-phospho-D-glucono-1,5-lactone + H2O = 6-phospho-D-gluconate + H(+). Its pathway is carbohydrate degradation; pentose phosphate pathway; D-ribulose 5-phosphate from D-glucose 6-phosphate (oxidative stage): step 2/3. Functionally, catalyzes the hydrolysis of 6-phosphogluconolactone to 6-phosphogluconate. This chain is 6-phosphogluconolactonase, found in Blochmanniella floridana.